The chain runs to 206 residues: SOSS complex subunit B2 (206 aa).

Residues 26–89 constitute a DNA-binding region (OB); it reads IVLEIGRVTK…SMWKGCLTLY (64 aa). Disordered stretches follow at residues 114-146 and 166-206; these read EPNPDYRGQQNKGAHNEQKNNSMNNSNNVGTGT and SYAG…AFKR. The span at 181–196 shows a compositional bias: polar residues; that stretch reads LPGTANNQTVMTTISN.

The protein belongs to the SOSS-B family. SOSS-B2 subfamily. Component of the SOSS complex, composed of SOSS-B (SOSS-B1/NABP2 or SOSS-B2/NABP1), SOSS-A/INTS3 and SOSS-C/INIP. SOSS complexes containing SOSS-B1/NABP2 are more abundant than complexes containing SOSS-B2/NABP1.

It localises to the nucleus. Its function is as follows. Component of the SOSS complex, a multiprotein complex that functions downstream of the MRN complex to promote DNA repair and G2/M checkpoint. In the SOSS complex, acts as a sensor of single-stranded DNA that binds to single-stranded DNA, in particular to polypyrimidines. The SOSS complex associates with DNA lesions and influences diverse endpoints in the cellular DNA damage response including cell-cycle checkpoint activation, recombinational repair and maintenance of genomic stability. Required for efficient homologous recombination-dependent repair of double-strand breaks (DSBs) and ATM-dependent signaling pathways. This chain is SOSS complex subunit B2 (NABP1), found in Bos taurus (Bovine).